Here is a 398-residue protein sequence, read N- to C-terminus: tRNA-specific 2-thiouridylase MnmA (398 aa).

Residues Ala-20 to Ser-27 and Leu-46 each bind ATP. Cys-114 acts as the Nucleophile in catalysis. A disulfide bond links Cys-114 and Cys-210. ATP is bound at residue Gly-138. The interval Arg-160–Gln-162 is interaction with tRNA. The active-site Cysteine persulfide intermediate is Cys-210.

This sequence belongs to the MnmA/TRMU family.

It localises to the cytoplasm. It carries out the reaction S-sulfanyl-L-cysteinyl-[protein] + uridine(34) in tRNA + AH2 + ATP = 2-thiouridine(34) in tRNA + L-cysteinyl-[protein] + A + AMP + diphosphate + H(+). Its function is as follows. Catalyzes the 2-thiolation of uridine at the wobble position (U34) of tRNA, leading to the formation of s(2)U34. The protein is tRNA-specific 2-thiouridylase MnmA of Brucella suis (strain ATCC 23445 / NCTC 10510).